The chain runs to 262 residues: Acyl-[acyl-carrier-protein]--UDP-N-acetylglucosamine O-acyltransferase (262 aa).

Belongs to the transferase hexapeptide repeat family. LpxA subfamily. In terms of assembly, homotrimer.

It localises to the cytoplasm. The enzyme catalyses a (3R)-hydroxyacyl-[ACP] + UDP-N-acetyl-alpha-D-glucosamine = a UDP-3-O-[(3R)-3-hydroxyacyl]-N-acetyl-alpha-D-glucosamine + holo-[ACP]. The protein operates within glycolipid biosynthesis; lipid IV(A) biosynthesis; lipid IV(A) from (3R)-3-hydroxytetradecanoyl-[acyl-carrier-protein] and UDP-N-acetyl-alpha-D-glucosamine: step 1/6. Its function is as follows. Involved in the biosynthesis of lipid A, a phosphorylated glycolipid that anchors the lipopolysaccharide to the outer membrane of the cell. The chain is Acyl-[acyl-carrier-protein]--UDP-N-acetylglucosamine O-acyltransferase from Photorhabdus laumondii subsp. laumondii (strain DSM 15139 / CIP 105565 / TT01) (Photorhabdus luminescens subsp. laumondii).